The primary structure comprises 149 residues: 3-hydroxyacyl-[acyl-carrier-protein] dehydratase FabZ (149 aa).

H47 is an active-site residue.

This sequence belongs to the thioester dehydratase family. FabZ subfamily.

It is found in the cytoplasm. It catalyses the reaction a (3R)-hydroxyacyl-[ACP] = a (2E)-enoyl-[ACP] + H2O. Its function is as follows. Involved in unsaturated fatty acids biosynthesis. Catalyzes the dehydration of short chain beta-hydroxyacyl-ACPs and long chain saturated and unsaturated beta-hydroxyacyl-ACPs. This chain is 3-hydroxyacyl-[acyl-carrier-protein] dehydratase FabZ, found in Thioalkalivibrio sulfidiphilus (strain HL-EbGR7).